We begin with the raw amino-acid sequence, 255 residues long: Wtf element wtf15 (255 aa).

Positions 19-78 (KAGHEIDLEGSPPSEHNSEEKSTLPSNSDILTSANPVSQASETPDHSIESNTGSTQSPTS) are disordered. Polar residues-rich tracts occupy residues 41 to 60 (TLPS…QASE) and 67 to 78 (ESNTGSTQSPTS). Helical transmembrane passes span 85-105 (FSFC…CVLP), 112-132 (FLIA…SGSI), and 162-182 (FLKT…LVLL).

Belongs to the WTF family.

The protein resides in the spore membrane. Its function is as follows. May act in meiotic drive. This is Wtf element wtf15 from Schizosaccharomyces kambucha (Fission yeast).